Here is a 2813-residue protein sequence, read N- to C-terminus: A-kinase anchor protein 13 (2813 aa).

Disordered regions lie at residues 304–400 and 415–439; these read AQDP…QDSC and LSSC…QESL. Residues 427-439 show a composition bias toward polar residues; the sequence is TKSSGMPTDQESL. The important for interaction with PRKAR2A stretch occupies residues 494–516; that stretch reads WKNVLQGGESTKERFENSNIGTA. Disordered stretches follow at residues 539–585, 632–653, and 690–726; these read AASS…VDQN, HQNS…SPIC, and SEST…RDTQ. The span at 561–577 shows a compositional bias: basic and acidic residues; the sequence is STEKTAETETSRSREES. The segment covering 690 to 702 has biased composition (polar residues); that stretch reads SESTTARQPSSQD. S790 carries the phosphoserine modification. Disordered stretches follow at residues 805–856 and 939–965; these read VPSQ…AAEL and ENAL…QFHE. T815 carries the phosphothreonine modification. Residues 835 to 844 show a composition bias toward basic and acidic residues; it reads PDTRPLEDRA. Composition is skewed to polar residues over residues 847-856 and 939-948; these read LSTSSTAAEL and ENALSSGTLQ. Residue T953 is modified to Phosphothreonine. A Phosphoserine modification is found at S983. 2 disordered regions span residues 1431–1455 and 1467–1542; these read GVLK…DSII and DITG…DSIT. Residues 1467–1478 are compositionally biased toward low complexity; that stretch reads DITGSSSSTDDT. A compositionally biased stretch (polar residues) spans 1488–1497; it reads GSDVSLSQIL. A phosphoserine mark is found at S1489, S1507, S1540, S1565, and S1602. Acidic residues predominate over residues 1525 to 1540; that stretch reads SEPADPGDVEEEEMDS. The tract at residues 1585 to 1715 is important for interaction with MAP2K3; that stretch reads RVLGDVVRRP…HSTFHNTSAN (131 aa). The tract at residues 1601 to 1638 is disordered; that stretch reads FSLEGLTGGAGVGNKPSSSLEVSSANAEELRHPFSGEE. Residues 1615 to 1626 show a composition bias toward polar residues; it reads KPSSSLEVSSAN. Basic and acidic residues predominate over residues 1628 to 1638; that stretch reads EELRHPFSGEE. Residues S1642, S1645, and S1647 each carry the phosphoserine modification. K1670 is modified (N6-methyllysine). Positions 1755–1793 are disordered; sequence KMSSSKKSKEKEKEKDKIKEKEKDSKDKEKDKKTVNGHT. A coiled-coil region spans residues 1758–1790; the sequence is SSKKSKEKEKEKDKIKEKEKDSKDKEKDKKTVN. Residues 1761 to 1788 show a composition bias toward basic and acidic residues; it reads KSKEKEKEKDKIKEKEKDSKDKEKDKKT. The Phorbol-ester/DAG-type zinc-finger motif lies at 1791–1838; the sequence is GHTFSSIPVVGPISCSQCMKPFTNKDAYTCANCSAFVHKGCRESLASC. S1876, S1895, and S1929 each carry phosphoserine. The segment at 1919-2813 is interaction with ESR1; sequence MSNTWKFLSH…VSAEGEEIFC (895 aa). T1930 carries the post-translational modification Phosphothreonine. Phosphoserine occurs at positions 1932 and 1945. Positions 1994–2191 constitute a DH domain; that stretch reads KRQEVIYELM…KDVIGAVDSK (198 aa). The PH domain occupies 2231-2333; the sequence is KLVRDGSVFL…WIQIIQDTIN (103 aa). Residues S2345 and S2398 each carry the phosphoserine modification. Residues 2345 to 2381 are a coiled coil; it reads SENEEEKKMLDTRARELKEQLHQKDQKILLLLEEKEM. The disordered stretch occupies residues 2466–2502; it reads ETFGGFDSHQMNASKGGEKEEGDDGQDLRRTESDSGL. The residue at position 2467 (T2467) is a Phosphothreonine. S2473 carries the post-translational modification Phosphoserine. Positions 2491–2502 are enriched in basic and acidic residues; it reads QDLRRTESDSGL. Residues S2563 and S2566 each carry the phosphoserine modification. Residues 2568-2683 adopt a coiled-coil conformation; that stretch reads LIEQEKQRSL…RLSQRQTERD (116 aa). A compositionally biased stretch (basic and acidic residues) spans 2665–2684; the sequence is QEQLRREAERLSQRQTERDL. A disordered region spans residues 2665-2813; that stretch reads QEQLRREAER…VSAEGEEIFC (149 aa). A phosphoserine mark is found at S2703, S2709, and S2728. Polar residues predominate over residues 2720–2735; it reads SLDSELSVSPKRNSIS. Positions 2760 to 2771 are enriched in low complexity; sequence QSQAPASTSAST.

Interacts with the cAMP-dependent protein kinase (PKA) holoenzyme and with the regulatory subunit PRKAR2A. Interacts with RHOA. Also interacts with RHOB and RHOC. Identified in a ternary complex with RHOA and PRKAR2A. Identified in a complex with NR3C1 and RHOA. Interacts with BRAF and KSR1. Identified in a complex with BRAF and KSR1. Component of a signaling complex containing at least AKAP13, PKN1, MAPK14, ZAK and MAP2K3. Within this complex, AKAP13 interacts directly with PKN1, which in turn recruits MAPK14, MAP2K3 and ZAK. Interacts (phosphorylated form) with YWHAB and YWHAZ. Interaction with YWHAB inhibits activation of RHOA, interferes with PKN1 binding and activation of MAP kinases. Interacts with GNA12. Interacts with IKBKB. Interacts with ESR1, THRA, PPARA and NME2. Interacts (via the C-terminal domain after the PH domain) with MEF2C and RXRB. Interacts (via the C-terminal domain after the PH domain) with PRKD1. As to expression, detected in mammary gland. Detected in heart (at protein level). Expressed as a 5.3 kb transcript in hematopoietic cells, skeletal muscle, lung, heart, estrogen-responsive reproductive tissues, including breast ductal epithelium. Also found in testis and breast cancer cell lines. Predominantly expressed as a 10 kb transcript in the heart and at lower levels in the lung, placenta, kidney, pancreas, skeletal muscle and liver. Transcripts of between 6-9 kb are also expressed in myeloid and lymphoid lineages, a variety of epithelial tissues, and in skeletal muscle.

The protein resides in the cytoplasm. It localises to the cytosol. Its subcellular location is the cell cortex. The protein localises to the nucleus. It is found in the membrane. Its function is as follows. Scaffold protein that plays an important role in assembling signaling complexes downstream of several types of G protein-coupled receptors. Activates RHOA in response to signaling via G protein-coupled receptors via its function as Rho guanine nucleotide exchange factor. May also activate other Rho family members. Part of a kinase signaling complex that links ADRA1A and ADRA1B adrenergic receptor signaling to the activation of downstream p38 MAP kinases, such as MAPK11 and MAPK14. Part of a signaling complex that links ADRA1B signaling to the activation of RHOA and IKBKB/IKKB, leading to increased NF-kappa-B transcriptional activity. Part of a RHOA-dependent signaling cascade that mediates responses to lysophosphatidic acid (LPA), a signaling molecule that activates G-protein coupled receptors and potentiates transcriptional activation of the glucocorticoid receptor NR3C1. Part of a signaling cascade that stimulates MEF2C-dependent gene expression in response to lysophosphatidic acid (LPA). Part of a signaling pathway that activates MAPK11 and/or MAPK14 and leads to increased transcription activation of the estrogen receptors ESR1 and ESR2. Part of a signaling cascade that links cAMP and EGFR signaling to BRAF signaling and to PKA-mediated phosphorylation of KSR1, leading to the activation of downstream MAP kinases, such as MAPK1 or MAPK3. Functions as a scaffold protein that anchors cAMP-dependent protein kinase (PKA) and PRKD1. This promotes activation of PRKD1, leading to increased phosphorylation of HDAC5 and ultimately cardiomyocyte hypertrophy. Has no guanine nucleotide exchange activity on CDC42, Ras or Rac. Required for normal embryonic heart development, and in particular for normal sarcomere formation in the developing cardiomyocytes. Plays a role in cardiomyocyte growth and cardiac hypertrophy in response to activation of the beta-adrenergic receptor by phenylephrine or isoproterenol. Required for normal adaptive cardiac hypertrophy in response to pressure overload. Plays a role in osteogenesis. The sequence is that of A-kinase anchor protein 13 (AKAP13) from Homo sapiens (Human).